We begin with the raw amino-acid sequence, 235 residues long: Probable ribosomal RNA small subunit methyltransferase A (235 aa).

6 residues coordinate S-adenosyl-L-methionine: His9, Leu11, Gly34, Glu55, Asp78, and Asn93.

It belongs to the class I-like SAM-binding methyltransferase superfamily. rRNA adenine N(6)-methyltransferase family. RsmA subfamily.

It is found in the cytoplasm. Specifically dimethylates two adjacent adenosines in the loop of a conserved hairpin near the 3'-end of 16S rRNA in the 30S particle. May play a critical role in biogenesis of 30S subunits. The sequence is that of Probable ribosomal RNA small subunit methyltransferase A from Pyrobaculum islandicum (strain DSM 4184 / JCM 9189 / GEO3).